A 241-amino-acid chain; its full sequence is MHLSTHPTSYPTRYQEIAAKLEQELRQHYRCGDYLPAEQQLAARFEVNRHTLRRAIDQLVEKGWVQRRQGVGVLVLMRPFDYPLNAQARFSQNLLDQGSHPTSEKLLSVLRPASGHVADALGITEGENVIHLRTLRRVNGVALCLIDHYFADLTLWPTLQRFDSGSLHDFLREQTGIALRRSQTRISARRAQAKECQRLEIPNMSPLLCVRTLNHRDGESSPAEYSVSLTRADMIEFTMEH.

The HTH gntR-type domain maps to 11–78; that stretch reads PTRYQEIAAK…QGVGVLVLMR (68 aa). Residues 38–57 constitute a DNA-binding region (H-T-H motif); that stretch reads EQQLAARFEVNRHTLRRAID.

Functionally, belongs to an operon involved in alkylphosphonate uptake and C-P lyase. Exact function not known. By similarity could be a transcriptional regulator. This Escherichia coli (strain K12) protein is Probable transcriptional regulator PhnF (phnF).